Consider the following 345-residue polypeptide: PI-PLC X domain-containing protein 1 (345 aa).

Residues 52-228 enclose the PI-PLC X-box domain; sequence QLWDVPLHHL…QVIVSYEDEA (177 aa).

In terms of tissue distribution, expressed at highest levels in brain and kidney. Also detected in stomach, thymus and skeletal muscle.

Its subcellular location is the cytoplasm. In Mus musculus (Mouse), this protein is PI-PLC X domain-containing protein 1 (Plcxd1).